The following is a 332-amino-acid chain: Ketol-acid reductoisomerase (NADP(+)) 2 (332 aa).

In terms of domain architecture, KARI N-terminal Rossmann spans 2-182 (AELFYDADAD…GGTRAGVIRT (181 aa)). NADP(+) contacts are provided by residues 25 to 28 (YGSQ), S51, S53, and 83 to 86 (DPIQ). The active site involves H108. Position 134 (G134) interacts with NADP(+). Residues 183–328 (TFTEETETDL…KELRKLMSWV (146 aa)) enclose the KARI C-terminal knotted domain. Residues D191, E195, E227, and E231 each coordinate Mg(2+). Residue S252 coordinates substrate.

The protein belongs to the ketol-acid reductoisomerase family. Requires Mg(2+) as cofactor.

The enzyme catalyses (2R)-2,3-dihydroxy-3-methylbutanoate + NADP(+) = (2S)-2-acetolactate + NADPH + H(+). It catalyses the reaction (2R,3R)-2,3-dihydroxy-3-methylpentanoate + NADP(+) = (S)-2-ethyl-2-hydroxy-3-oxobutanoate + NADPH + H(+). The protein operates within amino-acid biosynthesis; L-isoleucine biosynthesis; L-isoleucine from 2-oxobutanoate: step 2/4. It participates in amino-acid biosynthesis; L-valine biosynthesis; L-valine from pyruvate: step 2/4. Involved in the biosynthesis of branched-chain amino acids (BCAA). Catalyzes an alkyl-migration followed by a ketol-acid reduction of (S)-2-acetolactate (S2AL) to yield (R)-2,3-dihydroxy-isovalerate. In the isomerase reaction, S2AL is rearranged via a Mg-dependent methyl migration to produce 3-hydroxy-3-methyl-2-ketobutyrate (HMKB). In the reductase reaction, this 2-ketoacid undergoes a metal-dependent reduction by NADPH to yield (R)-2,3-dihydroxy-isovalerate. The chain is Ketol-acid reductoisomerase (NADP(+)) 2 from Streptomyces coelicolor (strain ATCC BAA-471 / A3(2) / M145).